The primary structure comprises 102 residues: Small ribosomal subunit protein uS10 (102 aa).

The protein belongs to the universal ribosomal protein uS10 family. In terms of assembly, part of the 30S ribosomal subunit.

In terms of biological role, involved in the binding of tRNA to the ribosomes. This Bifidobacterium animalis subsp. lactis (strain AD011) protein is Small ribosomal subunit protein uS10.